Reading from the N-terminus, the 179-residue chain is Ribosome maturation factor RimM (179 aa).

The PRC barrel domain maps to 102–179 (DGEYYWYQLE…EMKVEWDADF (78 aa)).

This sequence belongs to the RimM family. As to quaternary structure, binds ribosomal protein uS19.

The protein resides in the cytoplasm. Its function is as follows. An accessory protein needed during the final step in the assembly of 30S ribosomal subunit, possibly for assembly of the head region. Essential for efficient processing of 16S rRNA. May be needed both before and after RbfA during the maturation of 16S rRNA. It has affinity for free ribosomal 30S subunits but not for 70S ribosomes. The sequence is that of Ribosome maturation factor RimM from Pseudomonas syringae pv. tomato (strain ATCC BAA-871 / DC3000).